We begin with the raw amino-acid sequence, 616 residues long: Glycoprotein Q1 (616 aa).

The first 24 residues, 1 to 24 (MRPPRRSAPILVCAISMATALSNA), serve as a signal peptide directing secretion. Residues asparagine 23, asparagine 44, asparagine 282, asparagine 330, and asparagine 351 are each glycosylated (N-linked (GlcNAc...) asparagine; by host).

In terms of assembly, interacts with isoform gQ2. The heterodimer gQ1-gQ2 associates with the glycoprotein complex gH-gL to form a tetrameric complex. The gH/gL/gQ1/gQ2 complex binds to host TNFRSF4. Glycosylated by host.

The protein resides in the virion. The protein localises to the host endoplasmic reticulum lumen. Plays a role in virus entry by participating in host receptor binding at the cell surface. The protein is Glycoprotein Q1 of Homo sapiens (Human).